The primary structure comprises 359 residues: N-acetyl-gamma-glutamyl-phosphate reductase (359 aa).

Cysteine 162 is an active-site residue.

The protein belongs to the NAGSA dehydrogenase family. Type 1 subfamily.

It is found in the cytoplasm. It carries out the reaction N-acetyl-L-glutamate 5-semialdehyde + phosphate + NADP(+) = N-acetyl-L-glutamyl 5-phosphate + NADPH + H(+). It participates in amino-acid biosynthesis; L-arginine biosynthesis; N(2)-acetyl-L-ornithine from L-glutamate: step 3/4. Its function is as follows. Catalyzes the NADPH-dependent reduction of N-acetyl-5-glutamyl phosphate to yield N-acetyl-L-glutamate 5-semialdehyde. The polypeptide is N-acetyl-gamma-glutamyl-phosphate reductase (Prochlorococcus marinus (strain SARG / CCMP1375 / SS120)).